We begin with the raw amino-acid sequence, 180 residues long: UPF0227 protein YcfP (180 aa).

It belongs to the UPF0227 family.

The polypeptide is UPF0227 protein YcfP (Escherichia coli O7:K1 (strain IAI39 / ExPEC)).